A 597-amino-acid polypeptide reads, in one-letter code: Elongation factor 4 (597 aa).

The tr-type G domain occupies 2 to 184 (DHIRNFSIIA…ALIAKVPPPK (183 aa)). GTP is bound by residues 14 to 19 (DHGKST) and 131 to 134 (NKID).

The protein belongs to the TRAFAC class translation factor GTPase superfamily. Classic translation factor GTPase family. LepA subfamily.

It is found in the cell inner membrane. The enzyme catalyses GTP + H2O = GDP + phosphate + H(+). Required for accurate and efficient protein synthesis under certain stress conditions. May act as a fidelity factor of the translation reaction, by catalyzing a one-codon backward translocation of tRNAs on improperly translocated ribosomes. Back-translocation proceeds from a post-translocation (POST) complex to a pre-translocation (PRE) complex, thus giving elongation factor G a second chance to translocate the tRNAs correctly. Binds to ribosomes in a GTP-dependent manner. The sequence is that of Elongation factor 4 from Burkholderia multivorans (strain ATCC 17616 / 249).